We begin with the raw amino-acid sequence, 59 residues long: Large ribosomal subunit protein uL30 (59 aa).

It belongs to the universal ribosomal protein uL30 family. Part of the 50S ribosomal subunit.

The sequence is that of Large ribosomal subunit protein uL30 from Hydrogenobaculum sp. (strain Y04AAS1).